The primary structure comprises 157 residues: Heavy metal-associated isoprenylated plant protein 16 (157 aa).

In terms of domain architecture, HMA spans 2–71 (KQKILIRIAM…KVAFAELVSV (70 aa)). A disordered region spans residues 73-115 (KVEPPKDGDKKPEEEKKPEEKKPEEKKPEEKKPEPCCQPWQKP). The segment covering 75–106 (EPPKDGDKKPEEEKKPEEKKPEEKKPEEKKPE) has biased composition (basic and acidic residues). A Cysteine methyl ester modification is found at Cys-154. Residue Cys-154 is the site of S-farnesyl cysteine attachment. The propeptide at 155–157 (RIM) is removed in mature form.

Belongs to the HIPP family.

In terms of biological role, probable heavy-metal-binding protein. This Arabidopsis thaliana (Mouse-ear cress) protein is Heavy metal-associated isoprenylated plant protein 16.